Here is a 432-residue protein sequence, read N- to C-terminus: UDP-N-acetylmuramate--L-alanine ligase (432 aa).

109–115 (GAHGKST) is a binding site for ATP.

The protein belongs to the MurCDEF family.

The protein resides in the cytoplasm. It carries out the reaction UDP-N-acetyl-alpha-D-muramate + L-alanine + ATP = UDP-N-acetyl-alpha-D-muramoyl-L-alanine + ADP + phosphate + H(+). It functions in the pathway cell wall biogenesis; peptidoglycan biosynthesis. Cell wall formation. This is UDP-N-acetylmuramate--L-alanine ligase from Campylobacter jejuni subsp. jejuni serotype O:2 (strain ATCC 700819 / NCTC 11168).